The following is a 1165-amino-acid chain: ATP-dependent helicase/deoxyribonuclease subunit B (1165 aa).

The UvrD-like helicase ATP-binding domain maps to methionine 1 to arginine 298. An ATP-binding site is contributed by glycine 8–threonine 15. The UvrD-like helicase C-terminal domain occupies proline 279–aspartate 584. The [4Fe-4S] cluster site is built by cysteine 800, cysteine 1119, cysteine 1122, and cysteine 1128.

This sequence belongs to the helicase family. AddB/RexB type 1 subfamily. Heterodimer of AddA and AddB. It depends on Mg(2+) as a cofactor. The cofactor is [4Fe-4S] cluster.

In terms of biological role, the heterodimer acts as both an ATP-dependent DNA helicase and an ATP-dependent, dual-direction single-stranded exonuclease. Recognizes the chi site generating a DNA molecule suitable for the initiation of homologous recombination. The AddB subunit has 5' -&gt; 3' nuclease activity but not helicase activity. This is ATP-dependent helicase/deoxyribonuclease subunit B from Desulforudis audaxviator (strain MP104C).